Here is a 615-residue protein sequence, read N- to C-terminus: 1-deoxy-D-xylulose-5-phosphate synthase (615 aa).

Residues His-76 and 117 to 119 (GHS) contribute to the thiamine diphosphate site. Residue Asp-148 coordinates Mg(2+). Residues 149-150 (GA), Asn-177, Tyr-284, and Glu-365 each bind thiamine diphosphate. Asn-177 serves as a coordination point for Mg(2+).

It belongs to the transketolase family. DXPS subfamily. In terms of assembly, homodimer. It depends on Mg(2+) as a cofactor. Thiamine diphosphate is required as a cofactor.

The catalysed reaction is D-glyceraldehyde 3-phosphate + pyruvate + H(+) = 1-deoxy-D-xylulose 5-phosphate + CO2. The protein operates within metabolic intermediate biosynthesis; 1-deoxy-D-xylulose 5-phosphate biosynthesis; 1-deoxy-D-xylulose 5-phosphate from D-glyceraldehyde 3-phosphate and pyruvate: step 1/1. Functionally, catalyzes the acyloin condensation reaction between C atoms 2 and 3 of pyruvate and glyceraldehyde 3-phosphate to yield 1-deoxy-D-xylulose-5-phosphate (DXP). The sequence is that of 1-deoxy-D-xylulose-5-phosphate synthase from Francisella tularensis subsp. novicida (strain U112).